The following is a 633-amino-acid chain: MPCVADWLNNPFSIVQGIFAQNTPNSDWEKKVTDYFKEKLKENNATNWVPSLNDVPVHYLKPNSLVKFRCMVQDMFDPEFYMGVYETVDPNTNARVLHFGKYRDVAECGPQQEIDMNSSQTVTLERQTFYCVPVPGESAWVKEYLFSLQARVSPSTSYTPSRHKRSYEEDEDMEQHPSKQKEQHMGSGGDSHGCGEPKRLETEASAGHHLISPNCSPPLDLNFPLPGEKGPACLVKVYESWDTFKVNDVLEVYGILSVDPVLSIVNSEERDSSMLDPMECMDTAEEQRVHSPPSSLVPRIHVILAHKLQHLNPLLPACLNEEESKTFVSNFMSELSPVRAELLGFLTHALLGDSLAAEYLILHLISTVYARRDVLPLGKFTVNLSGCPRNSIFTEHIYRIIQQLVPASYRLQMTIENMNHSRFIPRKDYTANRLVSGILQLASNTSLVIDETQLEQGQLDTKGVHNVKALGNLITWQKVDYDFSYHQMEFPCNINVLITSEGRSLLPSDCQVQLQPQIIPPNMEEYMNSLLTAVLPSVLNKFRIYLSLLRLLDYSISDEVTKAVEEDFVEMRKNDPESITADDLHRTLLVARFLSLSAGQTTLSRERWLRAKQLEALRKARLQQQKCVNGNEL.

The disordered stretch occupies residues 154–198; sequence PSTSYTPSRHKRSYEEDEDMEQHPSKQKEQHMGSGGDSHGCGEPK. Residues 174–184 are compositionally biased toward basic and acidic residues; the sequence is EQHPSKQKEQH.

The protein belongs to the MCMBP family. Interacts with the MCM complex: associates with the MCM3-7 complex which lacks MCM2, while it does not interact with the MCM complex when MCM2 is present (MCM2-7 complex).

It is found in the nucleus. In terms of biological role, associated component of the MCM complex that acts as a regulator of DNA replication. Binds to the MCM complex during late S phase and promotes the disassembly of the MCM complex from chromatin, thereby acting as a key regulator of pre-replication complex (pre-RC) unloading from replicated DNA. Can dissociate the MCM complex without addition of ATP; probably acts by destabilizing interactions of each individual subunits of the MCM complex. Required for sister chromatid cohesion. This chain is Mini-chromosome maintenance complex-binding protein (MCMBP), found in Gallus gallus (Chicken).